A 70-amino-acid polypeptide reads, in one-letter code: Potassium channel toxin kappa-KTx 2.5 (70 aa).

Residues 1–26 form the signal peptide; that stretch reads MESSRKSYVLMLFLAFVIMNVCSVSG. Positions 27-42 are excised as a propeptide; the sequence is EPKDGEIAGFEMEEAR. Cystine bridges form between cysteine 46–cysteine 64 and cysteine 50–cysteine 60.

This sequence belongs to the short scorpion toxin superfamily. Potassium channel inhibitor kappa-KTx family. Kappa-KTx 2 subfamily. As to expression, expressed by the venom gland.

It localises to the secreted. In terms of biological role, voltage-independently blocks potassium currents on hKv1.1/KCNA1 (IC(50)=217 uM), and hKv1.4/KCNA4 (IC(50)=71 uM) (expressed in CHO cells). This chain is Potassium channel toxin kappa-KTx 2.5, found in Opisthacanthus cayaporum (South American scorpion).